The primary structure comprises 56 residues: Large ribosomal subunit protein bL33 (56 aa).

It belongs to the bacterial ribosomal protein bL33 family.

This is Large ribosomal subunit protein bL33 from Glaesserella parasuis serovar 5 (strain SH0165) (Haemophilus parasuis).